The sequence spans 226 residues: MKAIKIAIDGPASSGKSTVAKIIAKNLGYTYLDTGAMYRSATYIALTHGYTDKEVALILEELEKNPISFKKAKDGSQLVFLGDEDVTLAIRQNDVTNNVSWVSALPEIREELVHQQRRIAQAGGIIMDGRDIGTVVLPDAELKIFLVASVEERAERRYKENLEKGIESDFETLKEEIAARDYKDSHRKVSPLKAAEDALIFDTTGVSIDGVVQFIQEKAEKIVDMS.

10–18 (GPASSGKST) provides a ligand contact to ATP.

The protein belongs to the cytidylate kinase family. Type 1 subfamily.

The protein localises to the cytoplasm. It carries out the reaction CMP + ATP = CDP + ADP. It catalyses the reaction dCMP + ATP = dCDP + ADP. The protein is Cytidylate kinase of Streptococcus pyogenes serotype M5 (strain Manfredo).